Consider the following 96-residue polypeptide: Ferredoxin (96 aa).

Residues 4–94 form the 2Fe-2S ferredoxin-type domain; the sequence is YKVKLLTPEG…DVVIETHKEE (91 aa). [2Fe-2S] cluster is bound by residues cysteine 40, cysteine 45, cysteine 48, and cysteine 78.

The protein belongs to the 2Fe2S plant-type ferredoxin family. Requires [2Fe-2S] cluster as cofactor.

Its subcellular location is the plastid. It is found in the chloroplast. Its function is as follows. Ferredoxins are iron-sulfur proteins that transfer electrons in a wide variety of metabolic reactions. The sequence is that of Ferredoxin from Panax ginseng (Korean ginseng).